Here is a 1249-residue protein sequence, read N- to C-terminus: Pleckstrin homology-like domain family B member 2 (1249 aa).

Disordered regions lie at residues 64–85 (QPVSAKRSPSPMGTSVRSSPSL) and 128–154 (DHYTGRDSERSTRLSEKPPYSRYSSRN). A phosphoserine mark is found at serine 71 and serine 73. Polar residues predominate over residues 74-84 (PMGTSVRSSPS). Residues 128 to 143 (DHYTGRDSERSTRLSE) are compositionally biased toward basic and acidic residues. Phosphoserine is present on residues serine 156, serine 203, serine 241, and serine 244. Disordered stretches follow at residues 190–248 (SPIS…LSNM) and 264–289 (NQMSPLSLPPRSSLGNSRRGQLGEKD). Residues 231-248 (ENVSVRTRKYSGSSLSNM) show a composition bias toward polar residues. A compositionally biased stretch (low complexity) spans 267–283 (SPLSLPPRSSLGNSRRG). 11 positions are modified to phosphoserine: serine 329, serine 333, serine 347, serine 380, serine 383, serine 389, serine 411, serine 416, serine 465, serine 486, and serine 510. Positions 388–424 (DSDLESLRQSSETPQPVLRERKSSISSISGRDDLMDY) are disordered. Threonine 546 and threonine 570 each carry phosphothreonine. Coiled coils occupy residues 580–692 (TQEL…LDNC) and 718–803 (FEDL…LCNL). Residues 866–934 (VSQPQSSEHF…LGQSNSCGSV (69 aa)) are disordered. The segment covering 873 to 888 (EHFRSLEERKKQHKEG) has biased composition (basic and acidic residues). Threonine 894 is subject to Phosphothreonine. Positions 901–919 (TPSLSPHFSSATMGRSTTP) are enriched in polar residues. A coiled-coil region spans residues 1028–1094 (IARIEEMERL…QKLIEKEVKI (67 aa)). The 104-residue stretch at 1139-1242 (EKTCRGYLIK…WMDVIVTGAE (104 aa)) folds into the PH domain.

Interacts with FLNC. Interacts with AMOTL2; interaction may facilitate PHLDB2 localization to the myotube podosome cortex that surrounds the core. Part of a cortical microtubule stabilization complex (CMSC) composed of KANK1, PPFIA1, PPFIBP1, ERC1/ELKS, PHLDB2/LL5beta, CLASPs, KIF21A and possibly additional interactors; within CMSCs KANK1 and PHLDB2/LL5beta appear to be the core components for targeting of microtubule-binding proteins KIF21A and CLASPs, whereas PPFIA1, PPFIBP1 and ERC1/ELKS serve as scaffolds for protein clustering. Expressed at postsynaptic membranes of skeletal neuromuscular junctions (at protein level).

The protein resides in the cytoplasm. It is found in the membrane. The protein localises to the cell projection. Its subcellular location is the podosome. It localises to the cell cortex. Functionally, seems to be involved in the assembly of the postsynaptic apparatus. May play a role in acetyl-choline receptor (AChR) aggregation in the postsynaptic membrane. This Mus musculus (Mouse) protein is Pleckstrin homology-like domain family B member 2 (Phldb2).